The following is a 911-amino-acid chain: Gag-Pro polyprotein (911 aa).

A propeptide spanning residues 101–161 is cleaved from the precursor; it reads AAVAQTEEIL…TKKPKRFPVL (61 aa). 2 stretches are compositionally biased toward polar residues: residues 113–125 and 140–152; these read NSQTDLTKTSQNP and KSSSLQDKGLSST. The disordered stretch occupies residues 113-178; that stretch reads NSQTDLTKTS…DPEDPNPSEV (66 aa). The PPXY motif motif lies at 202–205; it reads PPPY. Positions 210 to 213 match the PTAP/PSAP motif motif; sequence PSAP. Positions 216-257 form a coiled coil; that stretch reads MAVVNPKEELKEKIAQLEEQIKLEELHQALISKLQKLKTGNE. Residues 260 to 279 form a disordered region; that stretch reads THPDTAGGLSRTPHWPGQHI. 2 CCHC-type zinc fingers span residues 547–564 and 576–593; these read GCCFKCGKKGHFAKNCHE and GLCPRCKRGKHWANECKS. Residues 592–626 form a disordered region; that stretch reads KSKTDNQGNPIPPHQGNRVEGPAPGPETSLWGSQL. Residues 780–856 enclose the Peptidase A2 domain; that stretch reads FTGLIDTGAD…LPVNLWGRDL (77 aa). Asp-785 serves as the catalytic Protease; shared with dimeric partner. The G-patch domain occupies 867–911; that stretch reads PNDIVTAQMLAQGYSPGKGLGKKENGILHPIPNQGQSNKKGFGNF.

Homodimer. As to quaternary structure, interacts with the reverse transcriptase/ribonuclease H. In terms of assembly, homotrimer. Released by autocatalytic processing. The protease can undergo further autoprocessing to yield 2 shorter but enzymatically active forms of 12 kDa and 13 kDa without the GDP domain. the 12 kDa form is monomeric. In terms of processing, myristoylated. Myristoylation of the matrix (MA) domain mediates the transport and binding of Gag polyproteins to the host plasma membrane and is required for the assembly of viral particles. Post-translationally, specific enzymatic cleavages in vivo yield mature proteins.

The protein localises to the virion. The enzyme catalyses dUTP + H2O = dUMP + diphosphate + H(+). In terms of biological role, matrix protein. Functionally, nucleocapsid protein p14: Nucleocapsid protein. Capsid protein. Its function is as follows. The aspartyl protease mediates proteolytic cleavages of Gag and Gag-Pol polyproteins during or shortly after the release of the virion from the plasma membrane. Cleavages take place as an ordered, step-wise cascade to yield mature proteins. This process is called maturation. Displays maximal activity during the budding process just prior to particle release from the cell. In terms of biological role, enhances the activity of the reverse transcriptase. May be part of the mature RT. This is Gag-Pro polyprotein (gag-pro) from Mason-Pfizer monkey virus (MPMV).